The chain runs to 225 residues: Cytidylate kinase (225 aa).

An ATP-binding site is contributed by 11–19; the sequence is GPAAAGKST.

This sequence belongs to the cytidylate kinase family. Type 1 subfamily.

Its subcellular location is the cytoplasm. The enzyme catalyses CMP + ATP = CDP + ADP. It carries out the reaction dCMP + ATP = dCDP + ADP. The protein is Cytidylate kinase of Anoxybacillus flavithermus (strain DSM 21510 / WK1).